A 206-amino-acid polypeptide reads, in one-letter code: Large ribosomal subunit protein uL4 (206 aa).

The segment at 43–78 (ARSGNRKQKDREEVKHTTKKPWRQKGTGRARAGMSS) is disordered. A compositionally biased stretch (basic and acidic residues) spans 49–58 (KQKDREEVKH). Basic residues predominate over residues 59–70 (TTKKPWRQKGTG).

This sequence belongs to the universal ribosomal protein uL4 family. Part of the 50S ribosomal subunit.

Its function is as follows. One of the primary rRNA binding proteins, this protein initially binds near the 5'-end of the 23S rRNA. It is important during the early stages of 50S assembly. It makes multiple contacts with different domains of the 23S rRNA in the assembled 50S subunit and ribosome. Functionally, forms part of the polypeptide exit tunnel. The chain is Large ribosomal subunit protein uL4 from Cupriavidus pinatubonensis (strain JMP 134 / LMG 1197) (Cupriavidus necator (strain JMP 134)).